Here is a 118-residue protein sequence, read N- to C-terminus: Basic leucine zipper transcriptional factor ATF-like 3 (118 aa).

The tract at residues 1–69 (MSQGPPAVSV…HESLEQENSV (69 aa)) is disordered. Phosphoserine is present on residues Ser2 and Ser24. A bZIP domain is found at 28-91 (DDRKVRRREK…RHLSEVLKEH (64 aa)). A basic motif region spans residues 30–55 (RKVRRREKNRVAAQRSRKKQTQKADK). A compositionally biased stretch (basic and acidic residues) spans 51 to 69 (QKADKLHEEHESLEQENSV). The tract at residues 56–84 (LHEEHESLEQENSVLRREISKLKEELRHL) is leucine-zipper.

It belongs to the bZIP family. In terms of assembly, heterodimer; heterodimerizes with JUN family proteins. Interacts with JUN. As to expression, highly expressed in CD8-alpha(+) classical dendritic cells (cDCs), with low to absent expression in other immune cells and non-immune tissues.

Its subcellular location is the nucleus. Functionally, AP-1 family transcription factor that controls the differentiation of CD8(+) thymic conventional dendritic cells in the immune system. Acts via the formation of a heterodimer with JUN family proteins that recognizes and binds DNA sequence 5'-TGA[CG]TCA-3' and regulates expression of target genes. Required for development of CD8-alpha(+) classical dendritic cells (cDCs) and related CD103(+) dendritic cells that cross-present antigens to CD8 T-cells and produce interleukin-12 (IL12) in response to pathogens. This chain is Basic leucine zipper transcriptional factor ATF-like 3 (Batf3), found in Mus musculus (Mouse).